Reading from the N-terminus, the 213-residue chain is Cytochrome b6 (213 aa).

Residues 30-50 (IFYCLGGLTLLCFIIQCLTGV) form a helical membrane-spanning segment. Heme c is bound at residue Cys33. Heme b-binding residues include His84 and His98. The next 3 membrane-spanning stretches (helical) occupy residues 88–108 (CQLM…TGAF), 114–134 (LNWV…FTGY), and 184–204 (LHVM…FIMI). Heme b contacts are provided by His185 and His200.

It belongs to the cytochrome b family. PetB subfamily. The subunits of the cytochrome bc complex are a Rieske Fe-S protein (PetC), cytochrome b6 (PetB), subunit IV (PetD), and a diheme cytochrome c (PetX). Requires heme b as cofactor. Heme c is required as a cofactor.

It localises to the cell membrane. Component of the cytochrome bc complex which donates electrons to the photosynthetic reaction center. The chain is Cytochrome b6 from Heliobacterium modesticaldum (strain ATCC 51547 / Ice1).